Here is a 68-residue protein sequence, read N- to C-terminus: UPF0352 protein CPS_2611 (68 aa).

It belongs to the UPF0352 family.

The sequence is that of UPF0352 protein CPS_2611 from Colwellia psychrerythraea (strain 34H / ATCC BAA-681) (Vibrio psychroerythus).